The primary structure comprises 134 residues: Arsenate reductase (134 aa).

Catalysis depends on nucleophile residues Cys-11, Cys-83, and Cys-90. 2 cysteine pairs are disulfide-bonded: Cys-11–Cys-83 and Cys-83–Cys-90.

This sequence belongs to the low molecular weight phosphotyrosine protein phosphatase family. Thioredoxin-coupled ArsC subfamily.

It localises to the cytoplasm. It carries out the reaction arsenate + [thioredoxin]-dithiol + H(+) = arsenite + [thioredoxin]-disulfide + H2O. In terms of biological role, catalyzes the reduction of arsenate [As(V)] to arsenite [As(III)]. The polypeptide is Arsenate reductase (Brevibacillus brevis (strain 47 / JCM 6285 / NBRC 100599)).